We begin with the raw amino-acid sequence, 322 residues long: N-acetyl-gamma-glutamyl-phosphate reductase (322 aa).

Cys132 is an active-site residue.

It belongs to the NAGSA dehydrogenase family. Type 1 subfamily.

It localises to the cytoplasm. It carries out the reaction N-acetyl-L-glutamate 5-semialdehyde + phosphate + NADP(+) = N-acetyl-L-glutamyl 5-phosphate + NADPH + H(+). It functions in the pathway amino-acid biosynthesis; L-arginine biosynthesis; N(2)-acetyl-L-ornithine from L-glutamate: step 3/4. In terms of biological role, catalyzes the NADPH-dependent reduction of N-acetyl-5-glutamyl phosphate to yield N-acetyl-L-glutamate 5-semialdehyde. The sequence is that of N-acetyl-gamma-glutamyl-phosphate reductase from Bacteroides fragilis (strain ATCC 25285 / DSM 2151 / CCUG 4856 / JCM 11019 / LMG 10263 / NCTC 9343 / Onslow / VPI 2553 / EN-2).